The following is a 205-amino-acid chain: MLRALSTLGARPLGRPPAQFLLLARGRKTRHDPPAKSKIGRVATPPAVDPAEFFVLTERYRQYRQTVRALRQEFVTEVRRKVHEARAGVLAERKALQDAAEHRELMAWNQAENQRLHELRMARLRQEAREQEQWQAEEAAREAREAEAWARLKEQEVLQLQEDAKNFITRENLEARVEEALDSPKSYNWAVTREGQVVTPQHKGS.

A mitochondrion-targeting transit peptide spans 1-26; that stretch reads MLRALSTLGARPLGRPPAQFLLLARG.

The protein belongs to the mitochondrion-specific ribosomal protein mS26 family. Component of the mitochondrial ribosome small subunit (28S) which comprises a 12S rRNA and about 30 distinct proteins.

The protein resides in the mitochondrion. This is Small ribosomal subunit protein mS26 (MRPS26) from Bos taurus (Bovine).